Here is a 100-residue protein sequence, read N- to C-terminus: Urease subunit gamma (100 aa).

This sequence belongs to the urease gamma subunit family. Heterotrimer of UreA (gamma), UreB (beta) and UreC (alpha) subunits. Three heterotrimers associate to form the active enzyme.

It localises to the cytoplasm. The enzyme catalyses urea + 2 H2O + H(+) = hydrogencarbonate + 2 NH4(+). It participates in nitrogen metabolism; urea degradation; CO(2) and NH(3) from urea (urease route): step 1/1. In Teredinibacter turnerae (strain ATCC 39867 / T7901), this protein is Urease subunit gamma.